We begin with the raw amino-acid sequence, 371 residues long: tRNA-specific 2-thiouridylase MnmA (371 aa).

ATP is bound by residues 13–20 (GMSGGVDS) and Met-39. An interaction with target base in tRNA region spans residues 99–101 (NPD). Cys-104 (nucleophile) is an active-site residue. Cys-104 and Cys-200 are oxidised to a cystine. Gly-128 lines the ATP pocket. Residues 150–152 (KDQ) form an interaction with tRNA region. The active-site Cysteine persulfide intermediate is the Cys-200. The segment at 308–309 (RY) is interaction with tRNA.

This sequence belongs to the MnmA/TRMU family.

It localises to the cytoplasm. The enzyme catalyses S-sulfanyl-L-cysteinyl-[protein] + uridine(34) in tRNA + AH2 + ATP = 2-thiouridine(34) in tRNA + L-cysteinyl-[protein] + A + AMP + diphosphate + H(+). Functionally, catalyzes the 2-thiolation of uridine at the wobble position (U34) of tRNA, leading to the formation of s(2)U34. The chain is tRNA-specific 2-thiouridylase MnmA from Bacillus cereus (strain ATCC 10987 / NRS 248).